A 189-amino-acid polypeptide reads, in one-letter code: MSENKQPEQNQDLTGEPSPEELEAAQAADEFDAMNAASEAQAQLAVLQAKNTELSDNYLRAKAEAENARRRAEDEISKARKFALESFAESLLPVLDSLEAGLNMKEATLEQLREGSQATLKQLKAALERNKVIEINPVAGSKFDPHQHQAISMVPAAQEANTVVAVLQKGYLIAERVLRPALVTVAAPQ.

The segment covering 1–13 has biased composition (polar residues); that stretch reads MSENKQPEQNQDL. The disordered stretch occupies residues 1–35; sequence MSENKQPEQNQDLTGEPSPEELEAAQAADEFDAMN.

It belongs to the GrpE family. As to quaternary structure, homodimer.

It is found in the cytoplasm. Participates actively in the response to hyperosmotic and heat shock by preventing the aggregation of stress-denatured proteins, in association with DnaK and GrpE. It is the nucleotide exchange factor for DnaK and may function as a thermosensor. Unfolded proteins bind initially to DnaJ; upon interaction with the DnaJ-bound protein, DnaK hydrolyzes its bound ATP, resulting in the formation of a stable complex. GrpE releases ADP from DnaK; ATP binding to DnaK triggers the release of the substrate protein, thus completing the reaction cycle. Several rounds of ATP-dependent interactions between DnaJ, DnaK and GrpE are required for fully efficient folding. This chain is Protein GrpE, found in Polaromonas naphthalenivorans (strain CJ2).